The following is a 117-amino-acid chain: MVQRLTYRRRLSYNTASNKTRLSRTPGNRIVYLYTKKVGKAPKSACGVCPGRLRGVRAVRPKVLMRLSKTKKHVSRAYGGSMCAKCVRDRIKRAFLIEEQKIVVKVLKAQAQSQKAK.

At Ser-12 the chain carries Phosphoserine. An N6-acetyllysine mark is found at Lys-36 and Lys-43. Lys-108 participates in a covalent cross-link: Glycyl lysine isopeptide (Lys-Gly) (interchain with G-Cter in SUMO2).

The protein belongs to the eukaryotic ribosomal protein eL34 family. In terms of assembly, component of the large ribosomal subunit.

The protein localises to the cytoplasm. The protein resides in the cytosol. Its subcellular location is the endoplasmic reticulum. Functionally, component of the large ribosomal subunit. The ribosome is a large ribonucleoprotein complex responsible for the synthesis of proteins in the cell. In Sus scrofa (Pig), this protein is Large ribosomal subunit protein eL34 (RPL34).